The chain runs to 617 residues: DNA mismatch repair protein MutL (617 aa).

A disordered region spans residues 363-394 (YAPAYGARPPQPSAWSVDTSPHRPLDDGQNRF). Residues 382-392 (SPHRPLDDGQN) are compositionally biased toward basic and acidic residues.

Belongs to the DNA mismatch repair MutL/HexB family.

This protein is involved in the repair of mismatches in DNA. It is required for dam-dependent methyl-directed DNA mismatch repair. May act as a 'molecular matchmaker', a protein that promotes the formation of a stable complex between two or more DNA-binding proteins in an ATP-dependent manner without itself being part of a final effector complex. This is DNA mismatch repair protein MutL from Allorhizobium ampelinum (strain ATCC BAA-846 / DSM 112012 / S4) (Agrobacterium vitis (strain S4)).